A 541-amino-acid polypeptide reads, in one-letter code: Propionate catabolism operon regulatory protein (541 aa).

A Sigma-54 factor interaction domain is found at 221-464 (IRGQSPQMEQ…RNMMERLALF (244 aa)). 321 to 330 (AHGGTLFLDE) contributes to the ATP binding site. The H-T-H motif DNA-binding region spans 513 to 532 (KTAAARYLGISRTTLWRRLK).

Functionally, involved in the transcriptional regulation of the propionate catabolism operon. The sequence is that of Propionate catabolism operon regulatory protein (prpR) from Salmonella typhimurium (strain LT2 / SGSC1412 / ATCC 700720).